Consider the following 1193-residue polypeptide: MEYASTFQRPILFHGGDGASYCFPNRLISPKGISITSGDSKVHSCFRLRRNVAQSGTLNLMNACFSGRFYSGHLHSTKSILGNGHQAKRIPFGFRLRCQGHESLGNADSNDHRIGESSESSDETEATDLKDARVENDTDSLEELKELLHKAIKELEVARLNSTMFEEKAQRISERAIALKDEAATAWLDVNKTLDVIRDTVYEEALAKEAVQTATMALSLAEARLQVIVESLEAGAGNDIPHVSEETEETIDVNDKEEALLAAKDDIKECQVNLDNCESQLSALLSKKDELQKEVDKLNEFAETIQISSLKAEEDVTNIMKLAEQAVAFELEATQRVNDAEIALQRAEKSLSISQTPEETQGQLSDEETSQEDAMVLSGNVEDVTHQVEKESPKDGDLPVVQITAELVPDIVGQRNKKLTQPYESSDHENGKPSVESSKVVEADSEKPKINVQTKKQETQKDLPKEGSSLNSPKASFNKSSRFFSASFFSSNPDGTATVFGSLVGSVKQQWPKLVLGLALLGAGLTLYSNGVGGNNQLLQQPDVTSTSTEDVSSSTKPLIRQVQKLPKRIKKLLEMIPHQEVNEEEASLFDFLWLLLASVIFVPLFQKIPGGSPVLGYLAAGILIGPYGLSIIRNVHGTRAIAEFGVVFLLFNIGLELSVERLSSMKKYVFGLGSAQVLVTAAVVGLLAHYVAGQAGPAAIVIGNGLALSSTAVVLQVLQERGESTSRHGRASFSVLLFQDLAVVVLLILIPLISPNSSKGGIGFQAIAEALGLAAVKAAVAITAIIAGGRLLLRPIYKQIAENRNAEIFSANTLLVILGTSLLTARAGLSMALGAFLAGLLLAETEFSLQVESDIAPYRGLLLGLFFMTVGMSIDPKLLLSNFPVIVGTLGLLIVGKTMLVVIMGKLFGISIISAIRVGLLLAPGGEFAFVAFGEAVNQGIMSPQLSSLLFLVVGISMAITPWLAAGGQLIASRFELHDVRSLLPVESETDDLQGHIIICGFGRVGQIIAQLLSERLIPFVALDVSSDRVTIGRSLDLPVYFGDAGSKEVLHKIGAGRACAAVVALDAPGANYRCVWALSKFYPNVKTFVRAHDVVHGLNLEKAGATAVVPETLEPSLQLAAAVLAQAKLPTSEIANTINEFRTRHLSELTELCEASGSSLGYGYSRTSKPKPQPSDASGDNQIIEGGTVVI.

The transit peptide at 1–49 (MEYASTFQRPILFHGGDGASYCFPNRLISPKGISITSGDSKVHSCFRLR) directs the protein to the chloroplast. The Stromal segment spans residues 50–585 (RNVAQSGTLN…MIPHQEVNEE (536 aa)). The segment at 103 to 135 (SLGNADSNDHRIGESSESSDETEATDLKDARVE) is disordered. Residues 131 to 355 (DARVENDTDS…RAEKSLSISQ (225 aa)) are a coiled coil. N6-acetyllysine; by NSI is present on lysine 168. The segment covering 351 to 364 (LSISQTPEETQGQL) has biased composition (polar residues). Disordered regions lie at residues 351–372 (LSIS…TSQE) and 421–474 (QPYE…NSPK). The span at 439–465 (KVVEADSEKPKINVQTKKQETQKDLPK) shows a compositional bias: basic and acidic residues. Residues 586 to 606 (EASLFDFLWLLLASVIFVPLF) traverse the membrane as a helical segment. At 607-612 (QKIPGG) the chain is on the chloroplast intermembrane side. Residues 613–633 (SPVLGYLAAGILIGPYGLSII) traverse the membrane as a helical segment. The Stromal segment spans residues 634–640 (RNVHGTR). The helical transmembrane segment at 641–661 (AIAEFGVVFLLFNIGLELSVE) threads the bilayer. At 662–668 (RLSSMKK) the chain is on the chloroplast intermembrane side. The helical transmembrane segment at 669–689 (YVFGLGSAQVLVTAAVVGLLA) threads the bilayer. The Stromal portion of the chain corresponds to 690 to 698 (HYVAGQAGP). The helical transmembrane segment at 699–719 (AAIVIGNGLALSSTAVVLQVL) threads the bilayer. Topologically, residues 720-733 (QERGESTSRHGRAS) are chloroplast intermembrane. Residues 734 to 754 (FSVLLFQDLAVVVLLILIPLI) traverse the membrane as a helical segment. Residues 755 to 766 (SPNSSKGGIGFQ) are Stromal-facing. A helical membrane pass occupies residues 767–787 (AIAEALGLAAVKAAVAITAII). Over 788 to 827 (AGGRLLLRPIYKQIAENRNAEIFSANTLLVILGTSLLTAR) the chain is Chloroplast intermembrane. A helical transmembrane segment spans residues 828–848 (AGLSMALGAFLAGLLLAETEF). The Stromal portion of the chain corresponds to 849–860 (SLQVESDIAPYR). Residues 861 to 881 (GLLLGLFFMTVGMSIDPKLLL) form a helical membrane-spanning segment. Residues 882 to 883 (SN) lie on the Chloroplast intermembrane side of the membrane. The chain crosses the membrane as a helical span at residues 884-904 (FPVIVGTLGLLIVGKTMLVVI). Topologically, residues 905–912 (MGKLFGIS) are stromal. The chain crosses the membrane as a helical span at residues 913-933 (IISAIRVGLLLAPGGEFAFVA). Residues 934–948 (FGEAVNQGIMSPQLS) are Chloroplast intermembrane-facing. Residues 949 to 969 (SLLFLVVGISMAITPWLAAGG) form a helical membrane-spanning segment. Topologically, residues 970–1193 (QLIASRFELH…QIIEGGTVVI (224 aa)) are stromal. One can recognise an RCK N-terminal domain in the interval 995–1112 (QGHIIICGFG…EKAGATAVVP (118 aa)). The tract at residues 1165 to 1184 (GYSRTSKPKPQPSDASGDNQ) is disordered.

This sequence belongs to the monovalent cation:proton antiporter 2 (CPA2) transporter (TC 2.A.37) family. KEA (TC 2.A.37.1) subfamily. Acetylated at Lys-168 by the stromal acetyltransferase enzyme NSI. As to expression, expressed in shoots and roots. Mainly localized to leaf veins, hypocotyls, mesophylls and guard cells. Accumulates at high levels in small and dividing plastids (at protein level).

The protein resides in the plastid. The protein localises to the chloroplast inner membrane. It carries out the reaction K(+)(in) + H(+)(out) = K(+)(out) + H(+)(in). Its activity is regulated as follows. Repressed by sodium ions Na(+). Its function is as follows. Electroneutral K(+)/H(+) efflux antiporter involved in chloroplastic K(+) homeostasis and osmotic adjustment, especially during plastid division and thylakoid membrane formation. Collaboratively with KEA2, adjusts alkaline stromal pH upon light to dark transitions in plastids. Together with KEA2, critical for chloroplast development, including chloroplast RNA-metabolism (e.g. rRNA maturation, polysome loading and RNA-protein interactions) and plastid gene expression (PGE), ion homeostasis, and photosynthesis. Contributes, during early seedling development, to the regulation of photosynthesis and abscisic acid- (ABA-) mediated primary root growth in a sucrose-dependent manner. Involved in the regulation of reactive oxygen and nitrogen species (ROS and RNS) metabolism. Required in roots for rapid hyperosmotic-induced Ca(2+) responses and for osmo-sensory potentiation in hyperosmotic conditions. May counteract resilience to drought and salt stress, involving photorespiratory pathway and stomata closure. The polypeptide is K(+) efflux antiporter 1, chloroplastic (Arabidopsis thaliana (Mouse-ear cress)).